The sequence spans 339 residues: Ketol-acid reductoisomerase (NADP(+)) (339 aa).

The KARI N-terminal Rossmann domain maps to methionine 1–threonine 182. Residues tyrosine 24–glutamine 27, arginine 48, serine 51, threonine 53, and aspartate 83–glutamine 86 contribute to the NADP(+) site. The active site involves histidine 108. Residue glycine 134 coordinates NADP(+). A KARI C-terminal knotted domain is found at threonine 183 to isoleucine 328. 4 residues coordinate Mg(2+): aspartate 191, glutamate 195, glutamate 227, and glutamate 231. Serine 252 provides a ligand contact to substrate.

This sequence belongs to the ketol-acid reductoisomerase family. Requires Mg(2+) as cofactor.

The catalysed reaction is (2R)-2,3-dihydroxy-3-methylbutanoate + NADP(+) = (2S)-2-acetolactate + NADPH + H(+). The enzyme catalyses (2R,3R)-2,3-dihydroxy-3-methylpentanoate + NADP(+) = (S)-2-ethyl-2-hydroxy-3-oxobutanoate + NADPH + H(+). It functions in the pathway amino-acid biosynthesis; L-isoleucine biosynthesis; L-isoleucine from 2-oxobutanoate: step 2/4. It participates in amino-acid biosynthesis; L-valine biosynthesis; L-valine from pyruvate: step 2/4. Involved in the biosynthesis of branched-chain amino acids (BCAA). Catalyzes an alkyl-migration followed by a ketol-acid reduction of (S)-2-acetolactate (S2AL) to yield (R)-2,3-dihydroxy-isovalerate. In the isomerase reaction, S2AL is rearranged via a Mg-dependent methyl migration to produce 3-hydroxy-3-methyl-2-ketobutyrate (HMKB). In the reductase reaction, this 2-ketoacid undergoes a metal-dependent reduction by NADPH to yield (R)-2,3-dihydroxy-isovalerate. The polypeptide is Ketol-acid reductoisomerase (NADP(+)) (Methylorubrum extorquens (strain CM4 / NCIMB 13688) (Methylobacterium extorquens)).